The primary structure comprises 1099 residues: MPKREDIKRILVIGSGPITIGQAAEFDYSGTQALKALKSAGYEVIIVNSNSATIMTDPEFSDAVYIEPLTVEFLEKIIEKERPDALLPTLGGQTALNLAVELAERGILDKYGVQLIGAKLESIKKAEDRELFKETMEKAGLEVLRSRLVNNLADALETAREFGYPVIIRPSFTLGGTGGGIAFNEEELRDIVTKGLIESPVHTVLIEESVLGWKEYELEVVRDGAGNFIVVCSIENLDPMGIHTGDSITVAPAQTLTDVEYQRMRDAAYKVIDAIGIETGGSNIQFALDPETGRMVVIEMNPRVSRSSALASKATGYPIAKVAALLAVGFTLDEIPNYITGKTMAAFEPSIDYVVVKIPRFQLEKFPGADPRLNTQMKSVGEVMAIGRTFKEALGKALRSLELDAAPKLDLEHIREHLANPTPERISYVFAAFRNGMDVEEVHELTKIDRWFLREMKACIELEEELKLKKFDVEILKKAKQWGYSDREIAEIWGVSEKEIRKMREDNRIFPVYKMVDTCAAEFEAQTPYYYSTYNGVENEAVPSDREKIMILGSGPNRIGQGIEFDYTNVHGVWSFQEEGYETIMVNSNPETVSTDYDTSDRLYFEPLTVEDVLEIVRNEKPKGVVVAFGGQTPLKIAKYLVEEKVNIIGTSFESIEIAEDREKFAKLLKQIGLKCPPFGTASSVEEALRVAENLGYPVLVRPSYVLGGRAMAIVDTPQELEMYVKEAAVVSPGYPVLIDKFLEDAIELDVDVVSDGKYVWIAGLMEQIEEAGVHSGDSACVLPPVSLSEKLVEEIEETVYKLVKALKIVGVANIQLAVKDEEIYIIEANPRASRTVPFVSKAIGIPVARIAAKIMVGRNLPELLSEYFPYPTRPGVKVDKLDESEILPTPWPKMFSVKEVVIPFHKFPGTDVLLGPEMRSTGEVMGIGEDFAEAFAKAQIAAGNPLPTTGAILATVADKDKREAVPLLAHLADMGFEIYATRGTAKALQSHGVEVKVVPKVGEGRPDVIDLLEQGKISLVVITQSSDEPALVAVSHGKEPFKVEGRRTVGYMIRTTALKRKIPYLTTVESLRAAVAAIRKMKKGSIVKVRRLTDTWKM.

The carboxyphosphate synthetic domain stretch occupies residues 1–402 (MPKREDIKRI…ALGKALRSLE (402 aa)). ATP-binding residues include arginine 129, arginine 169, glycine 175, glycine 176, glutamate 208, valine 210, glutamate 215, glycine 241, isoleucine 242, histidine 243, glutamine 285, and glutamate 299. The ATP-grasp 1 domain maps to 133 to 328 (KETMEKAGLE…IAKVAALLAV (196 aa)). Positions 285, 299, and 301 each coordinate Mg(2+). Positions 285, 299, and 301 each coordinate Mn(2+). The interval 403–541 (LDAAPKLDLE…STYNGVENEA (139 aa)) is oligomerization domain. Residues 542–944 (VPSDREKIMI…AFAKAQIAAG (403 aa)) are carbamoyl phosphate synthetic domain. The ATP-grasp 2 domain occupies 666–857 (AKLLKQIGLK…VARIAAKIMV (192 aa)). Residues arginine 702, lysine 741, leucine 743, glutamate 748, glycine 773, valine 774, histidine 775, serine 776, glutamine 816, and glutamate 828 each coordinate ATP. Positions 816, 828, and 830 each coordinate Mg(2+). Mn(2+)-binding residues include glutamine 816, glutamate 828, and asparagine 830. One can recognise an MGS-like domain in the interval 945–1099 (NPLPTTGAIL…VRRLTDTWKM (155 aa)). An allosteric domain region spans residues 945–1099 (NPLPTTGAIL…VRRLTDTWKM (155 aa)).

The protein belongs to the CarB family. As to quaternary structure, composed of two chains; the small (or glutamine) chain promotes the hydrolysis of glutamine to ammonia, which is used by the large (or ammonia) chain to synthesize carbamoyl phosphate. Tetramer of heterodimers (alpha,beta)4. It depends on Mg(2+) as a cofactor. The cofactor is Mn(2+).

The catalysed reaction is hydrogencarbonate + L-glutamine + 2 ATP + H2O = carbamoyl phosphate + L-glutamate + 2 ADP + phosphate + 2 H(+). It catalyses the reaction hydrogencarbonate + NH4(+) + 2 ATP = carbamoyl phosphate + 2 ADP + phosphate + 2 H(+). The protein operates within amino-acid biosynthesis; L-arginine biosynthesis; carbamoyl phosphate from bicarbonate: step 1/1. It participates in pyrimidine metabolism; UMP biosynthesis via de novo pathway; (S)-dihydroorotate from bicarbonate: step 1/3. Its function is as follows. Large subunit of the glutamine-dependent carbamoyl phosphate synthetase (CPSase). CPSase catalyzes the formation of carbamoyl phosphate from the ammonia moiety of glutamine, carbonate, and phosphate donated by ATP, constituting the first step of 2 biosynthetic pathways, one leading to arginine and/or urea and the other to pyrimidine nucleotides. The large subunit (synthetase) binds the substrates ammonia (free or transferred from glutamine from the small subunit), hydrogencarbonate and ATP and carries out an ATP-coupled ligase reaction, activating hydrogencarbonate by forming carboxy phosphate which reacts with ammonia to form carbamoyl phosphate. This chain is Carbamoyl phosphate synthase large chain, found in Thermotoga petrophila (strain ATCC BAA-488 / DSM 13995 / JCM 10881 / RKU-1).